The sequence spans 229 residues: Non-structural protein P8 (229 aa).

2 helical membrane passes run 119-139 (IIHMTLLIAAVVALLTSVCTL) and 162-182 (SLNPMLGVVNLGATFLMMVCA).

It belongs to the orbivirus NS3 family. In terms of assembly, forms homooligomers via coiled-coil motif. Interacts with host OPTN; this interaction inhibits innate immune response.

The protein resides in the host cell membrane. It is found in the host Golgi apparatus. Functionally, plays a role in the inhibition of host innate immune response. Interacts with host OPTN and thus inhibits the recruitment of TBK1 to the host Golgi apparatus. In turn, downstream partner IRF3 cannot be activated and IFN-beta production is impaired. Facilitates viral particle release either by increasing plasma membrane permeability through a viroporin-like activity or by viral budding. This is Non-structural protein P8 (Segment-10) from Bluetongue virus 17 (isolate USA) (BTV 17).